A 170-amino-acid chain; its full sequence is Small ribosomal subunit protein eS7 (170 aa).

The protein belongs to the eukaryotic ribosomal protein eS7 family. As to quaternary structure, component of the small ribosomal subunit.

The protein localises to the cytoplasm. This is Small ribosomal subunit protein eS7 (RPS7) from Encephalitozoon cuniculi (strain GB-M1) (Microsporidian parasite).